Reading from the N-terminus, the 177-residue chain is Large ribosomal subunit protein uL6 (177 aa).

It belongs to the universal ribosomal protein uL6 family. In terms of assembly, part of the 50S ribosomal subunit.

This protein binds to the 23S rRNA, and is important in its secondary structure. It is located near the subunit interface in the base of the L7/L12 stalk, and near the tRNA binding site of the peptidyltransferase center. The sequence is that of Large ribosomal subunit protein uL6 from Bordetella avium (strain 197N).